The sequence spans 155 residues: MAKGEGHILAQNKKARHDYHIVETVEAGIVLTGTEIKSVRAARIQLKDGFAQIKNGEAWLVNVHIAPFEQGNIWNADPERTRKLLLKKREITHLENELKGSGMTLVPLKVYLKDGFAKVLIGLAKGKHEYDKRETIKRRDQERDIKKQMKHYNAR.

Over residues 135-147 (TIKRRDQERDIKK) the composition is skewed to basic and acidic residues. The interval 135-155 (TIKRRDQERDIKKQMKHYNAR) is disordered.

The protein belongs to the SmpB family.

It is found in the cytoplasm. Functionally, required for rescue of stalled ribosomes mediated by trans-translation. Binds to transfer-messenger RNA (tmRNA), required for stable association of tmRNA with ribosomes. tmRNA and SmpB together mimic tRNA shape, replacing the anticodon stem-loop with SmpB. tmRNA is encoded by the ssrA gene; the 2 termini fold to resemble tRNA(Ala) and it encodes a 'tag peptide', a short internal open reading frame. During trans-translation Ala-aminoacylated tmRNA acts like a tRNA, entering the A-site of stalled ribosomes, displacing the stalled mRNA. The ribosome then switches to translate the ORF on the tmRNA; the nascent peptide is terminated with the 'tag peptide' encoded by the tmRNA and targeted for degradation. The ribosome is freed to recommence translation, which seems to be the essential function of trans-translation. The chain is SsrA-binding protein from Streptococcus pyogenes serotype M3 (strain SSI-1).